The primary structure comprises 254 residues: 3-dehydroquinate dehydratase (254 aa).

Residues 47–49 (EWR) and R83 contribute to the 3-dehydroquinate site. Catalysis depends on H144, which acts as the Proton donor/acceptor. Catalysis depends on K171, which acts as the Schiff-base intermediate with substrate. 3 residues coordinate 3-dehydroquinate: R214, S233, and Q237.

Belongs to the type-I 3-dehydroquinase family. As to quaternary structure, homodimer.

The catalysed reaction is 3-dehydroquinate = 3-dehydroshikimate + H2O. Its pathway is metabolic intermediate biosynthesis; chorismate biosynthesis; chorismate from D-erythrose 4-phosphate and phosphoenolpyruvate: step 3/7. Its function is as follows. Involved in the third step of the chorismate pathway, which leads to the biosynthesis of aromatic amino acids. Catalyzes the cis-dehydration of 3-dehydroquinate (DHQ) and introduces the first double bond of the aromatic ring to yield 3-dehydroshikimate. In Clostridium botulinum (strain Eklund 17B / Type B), this protein is 3-dehydroquinate dehydratase.